The sequence spans 85 residues: Large ribosomal subunit protein bL31 (85 aa).

A disordered region spans residues 65-85 (YGMGGAGKAGEDKKAGDKADA). The segment covering 73–85 (AGEDKKAGDKADA) has biased composition (basic and acidic residues).

The protein belongs to the bacterial ribosomal protein bL31 family. Type A subfamily. In terms of assembly, part of the 50S ribosomal subunit.

Its function is as follows. Binds the 23S rRNA. The polypeptide is Large ribosomal subunit protein bL31 (Synechococcus sp. (strain WH7803)).